The primary structure comprises 284 residues: tRNA uridine(34) hydroxylase (284 aa).

Residues 132–226 (AGRPVVMLDT…YFEEVGGAHY (95 aa)) enclose the Rhodanese domain. Cysteine 186 serves as the catalytic Cysteine persulfide intermediate.

The protein belongs to the TrhO family.

The enzyme catalyses uridine(34) in tRNA + AH2 + O2 = 5-hydroxyuridine(34) in tRNA + A + H2O. Functionally, catalyzes oxygen-dependent 5-hydroxyuridine (ho5U) modification at position 34 in tRNAs. This chain is tRNA uridine(34) hydroxylase, found in Burkholderia ambifaria (strain MC40-6).